The sequence spans 445 residues: 3-phosphoshikimate 1-carboxyvinyltransferase (445 aa).

Residues 1 to 25 (MSHSDQTSPLEARKSAALSGTARVP) are disordered. 3-phosphoshikimate-binding residues include Lys-28, Ser-29, and Arg-33. Residue Lys-28 coordinates phosphoenolpyruvate. Residues Gly-101 and Arg-129 each contribute to the phosphoenolpyruvate site. 3-phosphoshikimate contacts are provided by Ser-175, Gln-177, Asp-328, and Lys-355. Gln-177 is a binding site for phosphoenolpyruvate. Residue Asp-328 is the Proton acceptor of the active site. Phosphoenolpyruvate contacts are provided by Arg-359 and Arg-402.

The protein belongs to the EPSP synthase family. As to quaternary structure, monomer.

The protein resides in the cytoplasm. The enzyme catalyses 3-phosphoshikimate + phosphoenolpyruvate = 5-O-(1-carboxyvinyl)-3-phosphoshikimate + phosphate. It participates in metabolic intermediate biosynthesis; chorismate biosynthesis; chorismate from D-erythrose 4-phosphate and phosphoenolpyruvate: step 6/7. Its function is as follows. Catalyzes the transfer of the enolpyruvyl moiety of phosphoenolpyruvate (PEP) to the 5-hydroxyl of shikimate-3-phosphate (S3P) to produce enolpyruvyl shikimate-3-phosphate and inorganic phosphate. The protein is 3-phosphoshikimate 1-carboxyvinyltransferase of Rhodopseudomonas palustris (strain BisB5).